The chain runs to 414 residues: Nucleoporin NUP42 (414 aa).

The C3H1-type zinc finger occupies 1 to 25; sequence MPVCNFFLQGRCRYGDTCWNEHPTG. Disordered stretches follow at residues 24–73 and 200–221; these read TGGR…RGAA and PPAS…TSGF. FG repeat units follow at residues 43-44, 207-208, 214-215, 221-222, 233-234, 238-239, 257-258, 268-269, 280-281, 306-307, 325-326, 329-330, 335-336, 341-342, 347-348, 351-352, and 362-363; these read FG.

In terms of assembly, probable component of the nuclear pore complex (NPC).

Its subcellular location is the nucleus. It localises to the nuclear pore complex. The protein resides in the nucleus membrane. In terms of biological role, required for the export of mRNAs containing poly(A) tails from the nucleus into the cytoplasm. The sequence is that of Nucleoporin NUP42 (nup42) from Danio rerio (Zebrafish).